We begin with the raw amino-acid sequence, 125 residues long: Small ribosomal subunit protein bS6 (125 aa).

Residues 99-125 (ASPMVKAKDERRASAEVENNDFEDAEE) are disordered. The segment covering 104–113 (KAKDERRASA) has biased composition (basic and acidic residues). Positions 116–125 (ENNDFEDAEE) are enriched in acidic residues.

The protein belongs to the bacterial ribosomal protein bS6 family.

Functionally, binds together with bS18 to 16S ribosomal RNA. The protein is Small ribosomal subunit protein bS6 of Mannheimia succiniciproducens (strain KCTC 0769BP / MBEL55E).